The chain runs to 307 residues: Universal stress protein A family protein C25B2.10 (307 aa).

Residues 1-63 (MSESAPAGSK…RSSMEQPTFR (63 aa)) are disordered. Over residues 21 to 30 (PEPRTSKDQQ) the composition is skewed to basic and acidic residues. Residue serine 44 is modified to Phosphoserine. The residue at position 48 (threonine 48) is a Phosphothreonine. 2 positions are modified to phosphoserine: serine 98 and serine 102.

The protein belongs to the universal stress protein A family.

It is found in the barrier septum. Its subcellular location is the cell tip. This Schizosaccharomyces pombe (strain 972 / ATCC 24843) (Fission yeast) protein is Universal stress protein A family protein C25B2.10.